The following is a 281-amino-acid chain: E3 ubiquitin-protein ligase MARCHF5 (281 aa).

The RING-CH-type zinc-finger motif lies at 9–78 (LPQTMDRSCW…PQCNAEYLIV (70 aa)). Zn(2+) is bound by residues C17, C20, C36, C38, H46, C49, C68, and C71. 4 consecutive transmembrane segments (helical) span residues 102–122 (FAAA…YGAV), 142–162 (PLFL…GKMI), 212–232 (ILCG…LMFS), and 241–261 (TILG…YFKQ).

The protein resides in the mitochondrion outer membrane. It is found in the endoplasmic reticulum membrane. The enzyme catalyses S-ubiquitinyl-[E2 ubiquitin-conjugating enzyme]-L-cysteine + [acceptor protein]-L-lysine = [E2 ubiquitin-conjugating enzyme]-L-cysteine + N(6)-ubiquitinyl-[acceptor protein]-L-lysine.. Its pathway is protein modification; protein ubiquitination. Its function is as follows. Mitochondrial E3 ubiquitin-protein ligase that plays a crucial role in the control of mitochondrial morphology by acting as a positive regulator of mitochondrial fission. May play a role in the prevention of cell senescence acting as a regulator of mitochondrial quality control. This Gallus gallus (Chicken) protein is E3 ubiquitin-protein ligase MARCHF5 (MARCHF5).